Here is a 311-residue protein sequence, read N- to C-terminus: Transcription factor BIM2 (311 aa).

2 disordered regions span residues 1–60 (MRTG…RRSK) and 271–311 (ANQG…MKTL). Basic and acidic residues-rich tracts occupy residues 33 to 44 (SNRDSKENDKAS) and 51 to 60 (SVTEQRRRSK). One can recognise a bHLH domain in the interval 45–95 (AIRSKHSVTEQRRRSKINERFQILRELIPNSEQKRDTASFLLEVIDYVQYL).

As to quaternary structure, homodimer. Interacts with the N-terminus of BZR2/BES1. Expressed constitutively in roots, leaves, stems, and flowers.

It localises to the nucleus. Functionally, positive brassinosteroid-signaling protein. In Arabidopsis thaliana (Mouse-ear cress), this protein is Transcription factor BIM2 (BIM2).